We begin with the raw amino-acid sequence, 110 residues long: UPF0122 protein SPG_1182 (110 aa).

The protein belongs to the UPF0122 family.

Functionally, might take part in the signal recognition particle (SRP) pathway. This is inferred from the conservation of its genetic proximity to ftsY/ffh. May be a regulatory protein. In Streptococcus pneumoniae serotype 19F (strain G54), this protein is UPF0122 protein SPG_1182.